We begin with the raw amino-acid sequence, 328 residues long: Eukaryotic translation initiation factor 3 subunit I (328 aa).

WD repeat units follow at residues 8–49 (GHER…GTYE), 50–89 (GHTG…QLYK), 145–184 (TRES…FVES), 189–228 (NSGS…VIKT), and 286–327 (GHFG…FKYT).

Belongs to the eIF-3 subunit I family. As to quaternary structure, component of the eukaryotic translation initiation factor 3 (eIF-3) complex. The eIF-3 complex appears to include tif32/eif3a, SPAC25G10.08/eif3b, tif33/eif3c, SPBC4C3.07/eif3f, tif35/eif3g and sum1/eif3i. This set of common subunits may also associate exclusively with either moe1/eif3d and int6/eif3e, or with SPAC821.05/eif3h and SPAC1751.03/eif3m. The eIF-3 complex may also include SPAC3A12.13c/eif3j.

It localises to the cytoplasm. It is found in the nucleus. In terms of biological role, component of the eukaryotic translation initiation factor 3 (eIF-3) complex, which is involved in protein synthesis of a specialized repertoire of mRNAs and, together with other initiation factors, stimulates binding of mRNA and methionyl-tRNAi to the 40S ribosome. The eIF-3 complex specifically targets and initiates translation of a subset of mRNAs involved in cell proliferation. This Schizosaccharomyces pombe (strain 972 / ATCC 24843) (Fission yeast) protein is Eukaryotic translation initiation factor 3 subunit I (sum1).